A 584-amino-acid chain; its full sequence is uncharacterized protein (584 aa).

The N-terminal stretch at 1–27 (MGLSRKKIFTWPLLLTGMAVVSTTFSS) is a signal peptide. The N-palmitoyl cysteine moiety is linked to residue Cys-28. Cys-28 is lipidated: S-diacylglycerol cysteine. Residues 530–570 (NLPKKEGSTNQANQQTNQTNRSTDATKKDSSSDETNKNPLA) form a disordered region. Residues 538 to 552 (TNQANQQTNQTNRST) show a composition bias toward low complexity. A compositionally biased stretch (basic and acidic residues) spans 553 to 565 (DATKKDSSSDETN).

The protein belongs to the MG067/MG068/MG395 family.

The protein resides in the cell membrane. This is an uncharacterized protein from Mycoplasmoides gallisepticum (strain R(low / passage 15 / clone 2)) (Mycoplasma gallisepticum).